A 120-amino-acid polypeptide reads, in one-letter code: Large ribosomal subunit protein uL29 (120 aa).

The protein belongs to the universal ribosomal protein uL29 family. Component of the large ribosomal subunit. Mature ribosomes consist of a small (40S) and a large (60S) subunit. The 40S subunit contains about 32 different proteins and 1 molecule of RNA (18S). The 60S subunit contains 45 different proteins and 3 molecules of RNA (25S, 5.8S and 5S).

Its subcellular location is the cytoplasm. Functionally, component of the ribosome, a large ribonucleoprotein complex responsible for the synthesis of proteins in the cell. The small ribosomal subunit (SSU) binds messenger RNAs (mRNAs) and translates the encoded message by selecting cognate aminoacyl-transfer RNA (tRNA) molecules. The large subunit (LSU) contains the ribosomal catalytic site termed the peptidyl transferase center (PTC), which catalyzes the formation of peptide bonds, thereby polymerizing the amino acids delivered by tRNAs into a polypeptide chain. The nascent polypeptides leave the ribosome through a tunnel in the LSU and interact with protein factors that function in enzymatic processing, targeting, and the membrane insertion of nascent chains at the exit of the ribosomal tunnel. The protein is Large ribosomal subunit protein uL29 of Candida albicans (strain SC5314 / ATCC MYA-2876) (Yeast).